The primary structure comprises 70 residues: MQVLVRDNNVDQALRALKKKMQREGIFREMKMRDYYEKPSQKRAREKAEAVRRVRKLARKRAQREGLVAR.

Belongs to the bacterial ribosomal protein bS21 family.

This Rhizobium etli (strain ATCC 51251 / DSM 11541 / JCM 21823 / NBRC 15573 / CFN 42) protein is Small ribosomal subunit protein bS21B.